Here is a 279-residue protein sequence, read N- to C-terminus: Large ribosomal subunit protein uL2 (279 aa).

A disordered region spans residues 224–279 (AMNPIDHPHGGGEGRTSGGRHPVTPWGKGTKGNRTRKSKASDKLIVRSRHAKKKGR). The segment covering 269–279 (VRSRHAKKKGR) has biased composition (basic residues).

It belongs to the universal ribosomal protein uL2 family. As to quaternary structure, part of the 50S ribosomal subunit. Forms a bridge to the 30S subunit in the 70S ribosome.

Its function is as follows. One of the primary rRNA binding proteins. Required for association of the 30S and 50S subunits to form the 70S ribosome, for tRNA binding and peptide bond formation. It has been suggested to have peptidyltransferase activity; this is somewhat controversial. Makes several contacts with the 16S rRNA in the 70S ribosome. The chain is Large ribosomal subunit protein uL2 from Cereibacter sphaeroides (strain ATCC 17025 / ATH 2.4.3) (Rhodobacter sphaeroides).